A 932-amino-acid polypeptide reads, in one-letter code: Isoleucine--tRNA ligase (932 aa).

The short motif at 58 to 68 is the 'HIGH' region element; sequence PYANGNLHLGH. Glu567 contacts L-isoleucyl-5'-AMP. The short motif at 608–612 is the 'KMSKS' region element; the sequence is KMSKS. Lys611 contributes to the ATP binding site. Zn(2+)-binding residues include Cys895, Cys898, Cys915, and Cys918.

This sequence belongs to the class-I aminoacyl-tRNA synthetase family. IleS type 1 subfamily. Monomer. The cofactor is Zn(2+).

Its subcellular location is the cytoplasm. The catalysed reaction is tRNA(Ile) + L-isoleucine + ATP = L-isoleucyl-tRNA(Ile) + AMP + diphosphate. Its function is as follows. Catalyzes the attachment of isoleucine to tRNA(Ile). As IleRS can inadvertently accommodate and process structurally similar amino acids such as valine, to avoid such errors it has two additional distinct tRNA(Ile)-dependent editing activities. One activity is designated as 'pretransfer' editing and involves the hydrolysis of activated Val-AMP. The other activity is designated 'posttransfer' editing and involves deacylation of mischarged Val-tRNA(Ile). The sequence is that of Isoleucine--tRNA ligase from Azoarcus sp. (strain BH72).